The primary structure comprises 69 residues: U-Asilidin(12)-Dg3a (69 aa).

Positions 1–19 are cleaved as a signal peptide; sequence MRFLNIFLFFAAIIAFATA. The propeptide occupies 20-33; that stretch reads SQVFEEDEIDMEPR. Intrachain disulfides connect cysteine 36-cysteine 59, cysteine 45-cysteine 65, and cysteine 49-cysteine 67.

The protein belongs to the asilidin-12 family. Expressed by the venom gland.

The protein localises to the secreted. Its function is as follows. Moderately increases Kv11.1/KCNH2/ERG1 currents and shifts the voltage-dependence of the channel activation to hyperpolarised potentials. In vivo, induces neurotoxic effects when injected into insects (tested on L.cuprina and A.domesticus). The polypeptide is U-Asilidin(12)-Dg3a (Dolopus genitalis (Giant Australian assassin fly)).